A 107-amino-acid chain; its full sequence is Nucleoid-associated protein RC1337 (107 aa).

Belongs to the YbaB/EbfC family. Homodimer.

The protein localises to the cytoplasm. It is found in the nucleoid. Binds to DNA and alters its conformation. May be involved in regulation of gene expression, nucleoid organization and DNA protection. This Rickettsia conorii (strain ATCC VR-613 / Malish 7) protein is Nucleoid-associated protein RC1337.